Here is a 593-residue protein sequence, read N- to C-terminus: Aspartate--tRNA(Asp/Asn) ligase (593 aa).

E176 serves as a coordination point for L-aspartate. An aspartate region spans residues 200–203; it reads QIFK. R222 contributes to the L-aspartate binding site. ATP is bound by residues 222–224 and Q231; that span reads RDE. An L-aspartate-binding site is contributed by H450. E490 is a binding site for ATP. Position 497 (R497) interacts with L-aspartate. 542-545 serves as a coordination point for ATP; the sequence is GLDR.

It belongs to the class-II aminoacyl-tRNA synthetase family. Type 1 subfamily. In terms of assembly, homodimer.

It is found in the cytoplasm. It carries out the reaction tRNA(Asx) + L-aspartate + ATP = L-aspartyl-tRNA(Asx) + AMP + diphosphate. Aspartyl-tRNA synthetase with relaxed tRNA specificity since it is able to aspartylate not only its cognate tRNA(Asp) but also tRNA(Asn). Reaction proceeds in two steps: L-aspartate is first activated by ATP to form Asp-AMP and then transferred to the acceptor end of tRNA(Asp/Asn). In Symbiobacterium thermophilum (strain DSM 24528 / JCM 14929 / IAM 14863 / T), this protein is Aspartate--tRNA(Asp/Asn) ligase.